A 258-amino-acid chain; its full sequence is 4-hydroxy-tetrahydrodipicolinate reductase (258 aa).

Residues 8-13, 86-88, and 110-113 contribute to the NAD(+) site; these read GGSGKM, GTT, and ATNM. Catalysis depends on His-142, which acts as the Proton donor/acceptor. His-143 contacts (S)-2,3,4,5-tetrahydrodipicolinate. Catalysis depends on Lys-146, which acts as the Proton donor. 152–153 lines the (S)-2,3,4,5-tetrahydrodipicolinate pocket; the sequence is GT.

The protein belongs to the DapB family.

The protein resides in the cytoplasm. It catalyses the reaction (S)-2,3,4,5-tetrahydrodipicolinate + NAD(+) + H2O = (2S,4S)-4-hydroxy-2,3,4,5-tetrahydrodipicolinate + NADH + H(+). It carries out the reaction (S)-2,3,4,5-tetrahydrodipicolinate + NADP(+) + H2O = (2S,4S)-4-hydroxy-2,3,4,5-tetrahydrodipicolinate + NADPH + H(+). It functions in the pathway amino-acid biosynthesis; L-lysine biosynthesis via DAP pathway; (S)-tetrahydrodipicolinate from L-aspartate: step 4/4. In terms of biological role, catalyzes the conversion of 4-hydroxy-tetrahydrodipicolinate (HTPA) to tetrahydrodipicolinate. This chain is 4-hydroxy-tetrahydrodipicolinate reductase, found in Campylobacter hominis (strain ATCC BAA-381 / DSM 21671 / CCUG 45161 / LMG 19568 / NCTC 13146 / CH001A).